The following is a 145-amino-acid chain: 3-hydroxyacyl-[acyl-carrier-protein] dehydratase FabZ (145 aa).

Histidine 49 is a catalytic residue.

Belongs to the thioester dehydratase family. FabZ subfamily.

It localises to the cytoplasm. The catalysed reaction is a (3R)-hydroxyacyl-[ACP] = a (2E)-enoyl-[ACP] + H2O. Involved in unsaturated fatty acids biosynthesis. Catalyzes the dehydration of short chain beta-hydroxyacyl-ACPs and long chain saturated and unsaturated beta-hydroxyacyl-ACPs. In Rickettsia felis (strain ATCC VR-1525 / URRWXCal2) (Rickettsia azadi), this protein is 3-hydroxyacyl-[acyl-carrier-protein] dehydratase FabZ.